We begin with the raw amino-acid sequence, 586 residues long: Isocitrate dehydrogenase kinase/phosphatase (586 aa).

ATP is bound by residues 316 to 322 (ARGDRGL) and K337. The active site involves D372.

This sequence belongs to the AceK family.

It localises to the cytoplasm. The enzyme catalyses L-seryl-[isocitrate dehydrogenase] + ATP = O-phospho-L-seryl-[isocitrate dehydrogenase] + ADP + H(+). Bifunctional enzyme which can phosphorylate or dephosphorylate isocitrate dehydrogenase (IDH) on a specific serine residue. This is a regulatory mechanism which enables bacteria to bypass the Krebs cycle via the glyoxylate shunt in response to the source of carbon. When bacteria are grown on glucose, IDH is fully active and unphosphorylated, but when grown on acetate or ethanol, the activity of IDH declines drastically concomitant with its phosphorylation. This Anaeromyxobacter dehalogenans (strain 2CP-C) protein is Isocitrate dehydrogenase kinase/phosphatase.